The sequence spans 76 residues: MTVIRLTRIGRKKKPFYRVVVTDSRKRRDGGWIESIGYYNPLSEPKDIKIDKERLNYWKSVGAKMSERVEKLSQKA.

The protein belongs to the bacterial ribosomal protein bS16 family.

This Helicobacter pylori (strain HPAG1) protein is Small ribosomal subunit protein bS16.